Reading from the N-terminus, the 346-residue chain is Magnesium-protoporphyrin IX monomethyl ester [oxidative] cyclase (346 aa).

It belongs to the AcsF family. The cofactor is Fe cation.

It carries out the reaction Mg-protoporphyrin IX 13-monomethyl ester + 3 NADPH + 3 O2 + 2 H(+) = 3,8-divinyl protochlorophyllide a + 3 NADP(+) + 5 H2O. It participates in porphyrin-containing compound metabolism; chlorophyll biosynthesis (light-independent). Catalyzes the formation of the isocyclic ring in chlorophyll biosynthesis. Mediates the cyclase reaction, which results in the formation of divinylprotochlorophyllide (Pchlide) characteristic of all chlorophylls from magnesium-protoporphyrin IX 13-monomethyl ester (MgPMME). This is Magnesium-protoporphyrin IX monomethyl ester [oxidative] cyclase from Gloeobacter violaceus (strain ATCC 29082 / PCC 7421).